A 508-amino-acid chain; its full sequence is Photosystem II CP47 reaction center protein (508 aa).

6 helical membrane-spanning segments follow: residues 21–36 (SVHI…WAGS), 101–115 (IVFS…IWHW), 140–156 (GIHL…FGAF), 203–218 (IAAG…FHLS), 237–252 (VLSS…AFVV), and 457–472 (SFAL…HGSR).

Belongs to the PsbB/PsbC family. PsbB subfamily. PSII is composed of 1 copy each of membrane proteins PsbA, PsbB, PsbC, PsbD, PsbE, PsbF, PsbH, PsbI, PsbJ, PsbK, PsbL, PsbM, PsbT, PsbX, PsbY, PsbZ, Psb30/Ycf12, at least 3 peripheral proteins of the oxygen-evolving complex and a large number of cofactors. It forms dimeric complexes. Requires Binds multiple chlorophylls. PSII binds additional chlorophylls, carotenoids and specific lipids. as cofactor.

Its subcellular location is the plastid. It is found in the chloroplast thylakoid membrane. Functionally, one of the components of the core complex of photosystem II (PSII). It binds chlorophyll and helps catalyze the primary light-induced photochemical processes of PSII. PSII is a light-driven water:plastoquinone oxidoreductase, using light energy to abstract electrons from H(2)O, generating O(2) and a proton gradient subsequently used for ATP formation. The protein is Photosystem II CP47 reaction center protein of Lobularia maritima (Sweet alyssum).